Here is a 284-residue protein sequence, read N- to C-terminus: Ubiquinone biosynthesis protein COQ4, mitochondrial (284 aa).

Residues His165, Asp166, His169, and Glu181 each coordinate Zn(2+).

It belongs to the COQ4 family. In terms of assembly, component of a multi-subunit COQ enzyme complex, composed of at least COQ3, COQ4, COQ5, COQ6, COQ7 and COQ9. The cofactor is Zn(2+).

Its subcellular location is the mitochondrion inner membrane. The enzyme catalyses a 4-hydroxy-3-methoxy-5-(all-trans-polyprenyl)benzoate + H(+) = a 2-methoxy-6-(all-trans-polyprenyl)phenol + CO2. Its pathway is cofactor biosynthesis; ubiquinone biosynthesis. Functionally, lyase that catalyzes the C1-decarboxylation of 4-hydroxy-3-methoxy-5-(all-trans-polyprenyl)benzoic acid into 2-methoxy-6-(all-trans-polyprenyl)phenol during ubiquinone biosynthesis. The chain is Ubiquinone biosynthesis protein COQ4, mitochondrial from Ajellomyces dermatitidis (strain ER-3 / ATCC MYA-2586) (Blastomyces dermatitidis).